Consider the following 108-residue polypeptide: MGVTVETIQPGDGKNFPKKGDTVTMHYTGTLQNGSVFDSSVRRNEPFVTQIGVGRVIKGWDEGVLQLSLGQKANLICTPDYAYGPRGFPPVIPPNATLNFEVELLKIN.

The disordered stretch occupies residues 1-20; the sequence is MGVTVETIQPGDGKNFPKKG. Positions 20-108 constitute a PPIase FKBP-type domain; the sequence is GDTVTMHYTG…NFEVELLKIN (89 aa).

It belongs to the FKBP-type PPIase family. FKBP1 subfamily.

The protein resides in the cytoplasm. It carries out the reaction [protein]-peptidylproline (omega=180) = [protein]-peptidylproline (omega=0). Inhibited by both FK506 and rapamycin. Functionally, PPIases accelerate the folding of proteins. It catalyzes the cis-trans isomerization of proline imidic peptide bonds in oligopeptides. This is FK506-binding protein 1 (FKBP1) from Rhizopus delemar (strain RA 99-880 / ATCC MYA-4621 / FGSC 9543 / NRRL 43880) (Mucormycosis agent).